A 214-amino-acid polypeptide reads, in one-letter code: Triosephosphate isomerase (214 aa).

A substrate-binding site is contributed by 6–8 (NLK). The active-site Electrophile is H85. The Proton acceptor role is filled by E133. Substrate-binding positions include I138, G173, and 194-195 (AS).

Belongs to the triosephosphate isomerase family. Homotetramer; dimer of dimers.

Its subcellular location is the cytoplasm. It catalyses the reaction D-glyceraldehyde 3-phosphate = dihydroxyacetone phosphate. It functions in the pathway carbohydrate biosynthesis; gluconeogenesis. Its pathway is carbohydrate degradation; glycolysis; D-glyceraldehyde 3-phosphate from glycerone phosphate: step 1/1. Functionally, involved in the gluconeogenesis. Catalyzes stereospecifically the conversion of dihydroxyacetone phosphate (DHAP) to D-glyceraldehyde-3-phosphate (G3P). The protein is Triosephosphate isomerase of Halobacterium salinarum (strain ATCC 700922 / JCM 11081 / NRC-1) (Halobacterium halobium).